We begin with the raw amino-acid sequence, 301 residues long: Porin (301 aa).

As to quaternary structure, homotrimer.

Its subcellular location is the cell outer membrane. In terms of biological role, forms channels that allow the passive diffusion of small hydrophilic solutes up to an exclusion limit of about 0.6 kDa. The chain is Porin from Rhodobacter capsulatus (Rhodopseudomonas capsulata).